The sequence spans 522 residues: Sorting nexin-1 (522 aa).

Residues 1–142 (MASGGGGCSA…ELEEEEQEDQ (142 aa)) are disordered. Ser-32 and Ser-39 each carry phosphoserine. Residues 35–45 (EAGDSDTEGED) are compositionally biased toward acidic residues. A phosphothreonine mark is found at Thr-41 and Thr-48. Residues 55-65 (KPQSPKKTTSL) show a composition bias toward polar residues. Ser-58 and Ser-72 each carry phosphoserine. Over residues 71 to 80 (GSKENGIHEE) the composition is skewed to basic and acidic residues. Positions 98–107 (LDSTQNNQKT) are enriched in polar residues. Residues 132 to 142 (EELEEEEQEDQ) are compositionally biased toward acidic residues. The 130-residue stretch at 143–272 (FDLTVGITDP…EFLEKEELPR (130 aa)) folds into the PX domain. Positions 186, 188, and 214 each coordinate a 1,2-diacyl-sn-glycero-3-phospho-(1D-myo-inositol-3-phosphate). Ser-188 carries the post-translational modification Phosphoserine. At Lys-237 the chain carries N6-acetyllysine. An a 1,2-diacyl-sn-glycero-3-phospho-(1D-myo-inositol-3-phosphate)-binding site is contributed by Arg-238. A Phosphoserine modification is found at Ser-280. The interval 281–298 (GAGLLKMFNKATDAVSKM) is membrane-binding amphipathic helix. The region spanning 302-522 (MNESDIWFEE…AFLPEARAIS (221 aa)) is the BAR domain.

The protein belongs to the sorting nexin family. In terms of assembly, predominantly forms heterodimers with BAR domain-containing sorting nexins SNX5, SNX6 and SNX32; can self-associate to form homodimers. The heterodimers are proposed to self-assemble into helical arrays on the membrane to stabilize and expand local membrane curvature underlying endosomal tubule formation. Thought to be a component of the originally described retromer complex (also called SNX-BAR retromer) which is a pentamer containing the heterotrimeric retromer cargo-selective complex (CSC), also described as vacuolar protein sorting subcomplex (VPS) and a heterodimeric membrane-deforming subcomplex formed between SNX1 or SNX2 and SNX5 or SNX6 (also called SNX-BAR subcomplex); the respective CSC and SNX-BAR subcomplexes associate with low affinity. Interacts with SNX5, SNX6, SNX32, VPS26A, VPS29, VPS35, DRD5, DENND5A, KALRN, RHOG (GDP-bound form). The interaction with SNX2 is reported controversially. Interacts with DNAJC13; prevented by presence of HGS. Interacts with HGS.

It localises to the endosome membrane. The protein resides in the golgi apparatus. It is found in the trans-Golgi network membrane. Its subcellular location is the early endosome membrane. The protein localises to the cell projection. It localises to the lamellipodium. Functionally, involved in several stages of intracellular trafficking. Interacts with membranes containing phosphatidylinositol 3-phosphate (PtdIns(3P)) or phosphatidylinositol 3,5-bisphosphate (PtdIns(3,5)P2). Acts in part as component of the retromer membrane-deforming SNX-BAR subcomplex. The SNX-BAR retromer mediates retrograde transport of cargo proteins from endosomes to the trans-Golgi network (TGN) and is involved in endosome-to-plasma membrane transport for cargo protein recycling. The SNX-BAR subcomplex functions to deform the donor membrane into a tubular profile called endosome-to-TGN transport carrier (ETC). Can sense membrane curvature and has in vitro vesicle-to-membrane remodeling activity. Involved in retrograde endosome-to-TGN transport of lysosomal enzyme receptors (IGF2R, M6PR and SORT1). Plays a role in targeting ligand-activated EGFR to the lysosomes for degradation after endocytosis from the cell surface and release from the Golgi. Involvement in retromer-independent endocytic trafficking of P2RY1 and lysosomal degradation of protease-activated receptor-1/F2R. Promotes KALRN- and RHOG-dependent but retromer-independent membrane remodeling such as lamellipodium formation; the function is dependent on GEF activity of KALRN. Required for endocytosis of DRD5 upon agonist stimulation but not for basal receptor trafficking. The polypeptide is Sorting nexin-1 (Snx1) (Rattus norvegicus (Rat)).